A 344-amino-acid polypeptide reads, in one-letter code: Dihydroorotase (344 aa).

Positions 14 and 16 each coordinate Zn(2+). Substrate-binding positions include 16 to 18 (HLR) and Asn42. The Zn(2+) site is built by Lys100, His137, and His175. At Lys100 the chain carries N6-carboxylysine. His137 is a substrate binding site. Residue Leu220 participates in substrate binding. Asp248 provides a ligand contact to Zn(2+). Residue Asp248 is part of the active site. The substrate site is built by His252 and Ala264.

The protein belongs to the metallo-dependent hydrolases superfamily. DHOase family. Class II DHOase subfamily. As to quaternary structure, homodimer. Zn(2+) serves as cofactor.

It carries out the reaction (S)-dihydroorotate + H2O = N-carbamoyl-L-aspartate + H(+). Its pathway is pyrimidine metabolism; UMP biosynthesis via de novo pathway; (S)-dihydroorotate from bicarbonate: step 3/3. In terms of biological role, catalyzes the reversible cyclization of carbamoyl aspartate to dihydroorotate. This is Dihydroorotase from Cupriavidus taiwanensis (strain DSM 17343 / BCRC 17206 / CCUG 44338 / CIP 107171 / LMG 19424 / R1) (Ralstonia taiwanensis (strain LMG 19424)).